Here is a 705-residue protein sequence, read N- to C-terminus: Polyribonucleotide nucleotidyltransferase (705 aa).

The Mg(2+) site is built by D486 and D492. Residues 553 to 612 (PQFHTMKVDPEKIRDIIGKGGATIRSITEETGASIDIDDDGTVKIYGDDGDSLQGAINRI) form the KH domain. Positions 622–690 (GEVYKGKVVR…QRGRIKLSIK (69 aa)) constitute an S1 motif domain.

Belongs to the polyribonucleotide nucleotidyltransferase family. Component of the RNA degradosome, which is a multiprotein complex involved in RNA processing and mRNA degradation. Mg(2+) is required as a cofactor.

Its subcellular location is the cytoplasm. It carries out the reaction RNA(n+1) + phosphate = RNA(n) + a ribonucleoside 5'-diphosphate. Its function is as follows. Involved in mRNA degradation. Catalyzes the phosphorolysis of single-stranded polyribonucleotides processively in the 3'- to 5'-direction. This chain is Polyribonucleotide nucleotidyltransferase, found in Teredinibacter turnerae (strain ATCC 39867 / T7901).